Here is a 207-residue protein sequence, read N- to C-terminus: Guanylate kinase (207 aa).

The Guanylate kinase-like domain maps to 6-185 (GLLIVLSGPS…AKNRIQSIVE (180 aa)). Residue 13 to 20 (GPSGVGKG) coordinates ATP.

Belongs to the guanylate kinase family.

The protein localises to the cytoplasm. The enzyme catalyses GMP + ATP = GDP + ADP. Its function is as follows. Essential for recycling GMP and indirectly, cGMP. The polypeptide is Guanylate kinase (Staphylococcus epidermidis (strain ATCC 12228 / FDA PCI 1200)).